The following is a 515-amino-acid chain: Zinc metalloproteinase-disintegrin-like EoMP06 (515 aa).

Residues 1–94 (VEDHCYYHGR…TLGLIVPPHG (94 aa)) constitute a propeptide that is removed on maturation. A Pyrrolidone carboxylic acid modification is found at Gln95. The region spanning 100 to 296 (KFIELIIVVD…YNPKCIVDPP (197 aa)) is the Peptidase M12B domain. Glu103 is a binding site for Ca(2+). Residue Asn160 is glycosylated (N-linked (GlcNAc...) asparagine). Asp187 provides a ligand contact to Ca(2+). N-linked (GlcNAc...) asparagine glycans are attached at residues Asn194 and Asn225. Disulfide bonds link Cys211-Cys291, Cys251-Cys275, and Cys253-Cys258. His236 contributes to the Zn(2+) binding site. Residue Glu237 is part of the active site. The Zn(2+) site is built by His240 and His246. Residues Cys291, Val306, Asn309, Val311, Glu313, Glu316, and Asp319 each contribute to the Ca(2+) site. Positions 304–390 (PAVCGNGVWE…ECPRNEFQRN (87 aa)) constitute a Disintegrin domain. 14 disulfides stabilise this stretch: Cys307/Cys336, Cys318/Cys331, Cys320/Cys326, Cys330/Cys353, Cys344/Cys350, Cys349/Cys375, Cys362/Cys382, Cys369/Cys401, Cys394/Cys406, Cys413/Cys466, Cys428/Cys477, Cys441/Cys454, Cys461/Cys503, and Cys497/Cys508. The short motif at 368–370 (DCD) is the D/ECD-tripeptide element. Asp370, Val371, and Asn385 together coordinate Ca(2+).

It belongs to the venom metalloproteinase (M12B) family. P-III subfamily. P-IIIa sub-subfamily. Monomer. Zn(2+) is required as a cofactor. Expressed by the venom gland.

Its subcellular location is the secreted. Snake venom zinc metalloproteinase that catalyzes the conversion of prothrombin (F2) to alpha-thrombin through formation of a thrombin intermediate, thereby functioning as a procoagulant protein. The chain is Zinc metalloproteinase-disintegrin-like EoMP06 from Echis ocellatus (Ocellated saw-scaled viper).